The chain runs to 606 residues: Protein couch potato (606 aa).

Residues 81 to 105 (IKRRPTLPQTPASAPQVLSPSPKRQ) carry the Nuclear localization signal motif. 7 tandem repeats follow at residues 91–95 (PASAP), 109–113 (AVSVL), 114–118 (PVTVP), 122–126 (PVSVP), 128–132 (PVSVP), 134–138 (PVSVK), and 159–163 (PISHP). Positions 91–164 (PASAPQVLSP…SHSHPISHPH (74 aa)) are 7 X 5 AA approximate repeats of P-V-S-V-P. Disordered regions lie at residues 147-166 (QIAHTHQISHSHPISHPHHH), 282-311 (QQQQHILLSSGSSSSKHNSNNNSNTSAGAA), 324-365 (VPTT…TSAA), and 388-410 (PATSAVSDSNNNLNSSSSSNSNS). Over residues 344–365 (SNSATASAPTTPSPAGSVTSAA) the composition is skewed to low complexity. An RRM domain is found at 442-524 (RTLFVSGLPM…QTIRLEFAKS (83 aa)).

Expressed in neural precursors and their daughter cells in the embryonic peripheral nervous system. Less abundant in a number of glial cells in the peripheral and central nervous systems and also present at low levels in the developing gut.

Its subcellular location is the nucleus. Its function is as follows. May play a role in the development or function of the peripheral nervous system by regulating the processing of nervous system-specific transcripts. In Drosophila melanogaster (Fruit fly), this protein is Protein couch potato (cpo).